Here is a 223-residue protein sequence, read N- to C-terminus: Deoxyribose-phosphate aldolase (223 aa).

Asp-89 acts as the Proton donor/acceptor in catalysis. The active-site Schiff-base intermediate with acetaldehyde is Lys-152. Lys-181 serves as the catalytic Proton donor/acceptor.

The protein belongs to the DeoC/FbaB aldolase family. DeoC type 1 subfamily.

It localises to the cytoplasm. It carries out the reaction 2-deoxy-D-ribose 5-phosphate = D-glyceraldehyde 3-phosphate + acetaldehyde. Its pathway is carbohydrate degradation; 2-deoxy-D-ribose 1-phosphate degradation; D-glyceraldehyde 3-phosphate and acetaldehyde from 2-deoxy-alpha-D-ribose 1-phosphate: step 2/2. Catalyzes a reversible aldol reaction between acetaldehyde and D-glyceraldehyde 3-phosphate to generate 2-deoxy-D-ribose 5-phosphate. The sequence is that of Deoxyribose-phosphate aldolase from Bacillus cereus (strain G9842).